Consider the following 146-residue polypeptide: MGGTTDFVLSITIVLVILIIIAFIWYNFTGWSPFKYSKGNTVTFKTPDESSIAYMRFRNCIFTFTDPKGSLHSIDVTEVLNNMAKGFRDAQNPPSSFTLGGHCQAPLNAFSFVLPGVNDRATVATADDAKKWENCDATLTGLQRII.

The helical transmembrane segment at 7–27 threads the bilayer; it reads FVLSITIVLVILIIIAFIWYN.

It belongs to the asfivirus E146L family.

It localises to the host membrane. It is found in the virion. This is an uncharacterized protein from African swine fever virus (strain Badajoz 1971 Vero-adapted) (Ba71V).